Reading from the N-terminus, the 375-residue chain is Sulfite efflux pump SSU1 (375 aa).

At 1–25 (MPSGSGFHNIEEAGEKARKRDDWIA) the chain is on the cytoplasmic side. A helical transmembrane segment spans residues 26–46 (ISNFHPGWFSVNMGTGITAIL). Residues 47 to 59 (LQNLPYQFPGLHY) are Extracellular-facing. The chain crosses the membrane as a helical span at residues 60 to 80 (IAVILFILNVIIFFLFLTISI). Over 81–101 (TRYCLWPDKFKAMLAHPAHSM) the chain is Cytoplasmic. The chain crosses the membrane as a helical span at residues 102-122 (LLGTFPMGFATIINCIVFICV). Residues 123 to 135 (PVWGEWASRFAWG) lie on the Extracellular side of the membrane. A helical membrane pass occupies residues 136–156 (LWWIDAAVSVAICYFVPFMLM). At 157-167 (TKHTSSLETMT) the chain is on the cytoplasmic side. A helical membrane pass occupies residues 168-188 (AAWLLPIVAPVVAAASGGVVA). Over 189 to 200 (DSLQNDTHALIT) the chain is Extracellular. N-linked (GlcNAc...) asparagine glycosylation occurs at N193. A helical transmembrane segment spans residues 201–221 (ILVCYVMWGSAVPLAMVILVI). At 222–234 (YFQRLAIHKLVPR) the chain is on the cytoplasmic side. Residues 235 to 255 (AAIVSALLPIGPLGQGGFGLM) traverse the membrane as a helical segment. Topologically, residues 256–277 (QLGVVAKRVFPRLDFLAPIAGD) are extracellular. A helical membrane pass occupies residues 278–298 (IFYVMGAFIAMIMWGFGLIWL). Residues 299 to 309 (WFALASFTRGK) lie on the Cytoplasmic side of the membrane. Residues 310–330 (FYFNIGWWAFTFPLGVFTTAT) form a helical membrane-spanning segment. Topologically, residues 331-343 (TQMGKEFNSPFFD) are extracellular. A helical transmembrane segment spans residues 344–364 (ILGTFFSIVVTCMWVLVFALT). Residues 365-375 (VYKSCTKELFR) lie on the Cytoplasmic side of the membrane.

This sequence belongs to the tellurite-resistance/dicarboxylate transporter (TDT) family.

It is found in the cell membrane. In terms of biological role, sulphite efflux pump required for the secretion of sulphite as a reducing agent. In the presence of sulphite, cystine in keratin is directly cleaved to cysteine and S-sulphocysteine, and thereby, reduced proteins become accessible to hydrolysis by a variety of secreted endo- and exoproteases. Excretion of sulphite mediated by an efflux pump also represents a detoxification pathway for dermatophytes during infection of the epidermal stratum corneum, hair and nails, which are rich in cysteine. In Arthroderma benhamiae (strain ATCC MYA-4681 / CBS 112371) (Trichophyton mentagrophytes), this protein is Sulfite efflux pump SSU1.